We begin with the raw amino-acid sequence, 476 residues long: Ribulose bisphosphate carboxylase large chain (476 aa).

2 residues coordinate substrate: asparagine 116 and threonine 166. Catalysis depends on lysine 168, which acts as the Proton acceptor. Lysine 170 serves as a coordination point for substrate. Mg(2+) is bound by residues lysine 194, aspartate 196, and glutamate 197. Lysine 194 is modified (N6-carboxylysine). The Proton acceptor role is filled by histidine 286. Substrate-binding residues include arginine 287, histidine 319, and serine 371.

Belongs to the RuBisCO large chain family. Type I subfamily. Heterohexadecamer of 8 large chains and 8 small chains. It depends on Mg(2+) as a cofactor.

It carries out the reaction 2 (2R)-3-phosphoglycerate + 2 H(+) = D-ribulose 1,5-bisphosphate + CO2 + H2O. The enzyme catalyses D-ribulose 1,5-bisphosphate + O2 = 2-phosphoglycolate + (2R)-3-phosphoglycerate + 2 H(+). Its function is as follows. RuBisCO catalyzes two reactions: the carboxylation of D-ribulose 1,5-bisphosphate, the primary event in carbon dioxide fixation, as well as the oxidative fragmentation of the pentose substrate. Both reactions occur simultaneously and in competition at the same active site. This is Ribulose bisphosphate carboxylase large chain from Pseudonocardia dioxanivorans (strain ATCC 55486 / DSM 44775 / JCM 13855 / CB1190).